A 106-amino-acid chain; its full sequence is Large ribosomal subunit protein bL21 (106 aa).

It belongs to the bacterial ribosomal protein bL21 family. Part of the 50S ribosomal subunit. Contacts protein L20.

Its function is as follows. This protein binds to 23S rRNA in the presence of protein L20. This chain is Large ribosomal subunit protein bL21, found in Xanthomonas euvesicatoria pv. vesicatoria (strain 85-10) (Xanthomonas campestris pv. vesicatoria).